We begin with the raw amino-acid sequence, 395 residues long: Synaptotagmin-8 (395 aa).

The Extracellular portion of the chain corresponds to M1–T44. A helical; Signal-anchor for type III membrane protein membrane pass occupies residues L45–C65. Over C66–S395 the chain is Cytoplasmic. C2 domains follow at residues Q113 to Y229 and Q241 to H370.

The protein belongs to the synaptotagmin family. As to quaternary structure, homodimer or homooligomer. Homodimerization and homooligomerization do not depend on Ca(2+). Interacts with SYNCRIP isoform 2 C-terminus. Binds inositol 1,3,4,5-tetrakisphosphate (IP4). Binds to AP2 in a Ca(2+)-independent manner. Interacts with STX1A, STX1B and STX2; the interaction is Ca(2+)-dependent. Ubiquitous. Detected in testis and brain. Expressed in primary neurons, neuroendocrine and endocrine cells.

It is found in the cytoplasm. It localises to the cell membrane. The protein resides in the cytoplasmic vesicle. The protein localises to the secretory vesicle. Its subcellular location is the acrosome. Involved in the trafficking and exocytosis of secretory vesicles in non-neuronal tissues. Mediates Ca(2+)-regulation of exocytosis acrosomal reaction in sperm. May mediate Ca(2+)-regulation of exocytosis in insulin secreted cells. The polypeptide is Synaptotagmin-8 (Syt8) (Mus musculus (Mouse)).